The sequence spans 403 residues: NADH-quinone oxidoreductase subunit D (403 aa).

Belongs to the complex I 49 kDa subunit family. In terms of assembly, NDH-1 is composed of 14 different subunits. Subunits NuoB, C, D, E, F, and G constitute the peripheral sector of the complex.

The protein resides in the cell membrane. The catalysed reaction is a quinone + NADH + 5 H(+)(in) = a quinol + NAD(+) + 4 H(+)(out). NDH-1 shuttles electrons from NADH, via FMN and iron-sulfur (Fe-S) centers, to quinones in the respiratory chain. The immediate electron acceptor for the enzyme in this species is believed to be a menaquinone. Couples the redox reaction to proton translocation (for every two electrons transferred, four hydrogen ions are translocated across the cytoplasmic membrane), and thus conserves the redox energy in a proton gradient. This chain is NADH-quinone oxidoreductase subunit D, found in Amoebophilus asiaticus (strain 5a2).